The sequence spans 367 residues: DNA replication and repair protein RecF (367 aa).

Gly-30–Thr-37 lines the ATP pocket.

The protein belongs to the RecF family.

It localises to the cytoplasm. In terms of biological role, the RecF protein is involved in DNA metabolism; it is required for DNA replication and normal SOS inducibility. RecF binds preferentially to single-stranded, linear DNA. It also seems to bind ATP. The chain is DNA replication and repair protein RecF from Clostridium tetani (strain Massachusetts / E88).